A 161-amino-acid chain; its full sequence is 3-isopropylmalate dehydratase small subunit (161 aa).

The protein belongs to the LeuD family. LeuD type 2 subfamily. As to quaternary structure, heterodimer of LeuC and LeuD.

It catalyses the reaction (2R,3S)-3-isopropylmalate = (2S)-2-isopropylmalate. The protein operates within amino-acid biosynthesis; L-leucine biosynthesis; L-leucine from 3-methyl-2-oxobutanoate: step 2/4. In terms of biological role, catalyzes the isomerization between 2-isopropylmalate and 3-isopropylmalate, via the formation of 2-isopropylmaleate. The polypeptide is 3-isopropylmalate dehydratase small subunit (Pyrobaculum calidifontis (strain DSM 21063 / JCM 11548 / VA1)).